Reading from the N-terminus, the 206-residue chain is Ribosomal RNA small subunit methyltransferase G (206 aa).

S-adenosyl-L-methionine is bound by residues G73, L78, 124 to 125, and R139; that span reads VE.

It belongs to the methyltransferase superfamily. RNA methyltransferase RsmG family.

The protein localises to the cytoplasm. The catalysed reaction is guanosine(527) in 16S rRNA + S-adenosyl-L-methionine = N(7)-methylguanosine(527) in 16S rRNA + S-adenosyl-L-homocysteine. In terms of biological role, specifically methylates the N7 position of guanine in position 527 of 16S rRNA. This Pectobacterium atrosepticum (strain SCRI 1043 / ATCC BAA-672) (Erwinia carotovora subsp. atroseptica) protein is Ribosomal RNA small subunit methyltransferase G.